The primary structure comprises 195 residues: Probable GTP-binding protein EngB (195 aa).

Residues 24 to 195 (DIPEIALAGR…AAWDAILSKI (172 aa)) form the EngB-type G domain. Residues 32–39 (GRSNVGKS), 59–63 (GKTQL), 77–80 (DVPG), 144–147 (TKAD), and 176–178 (FSS) contribute to the GTP site. The Mg(2+) site is built by Ser39 and Thr61.

Belongs to the TRAFAC class TrmE-Era-EngA-EngB-Septin-like GTPase superfamily. EngB GTPase family. Mg(2+) is required as a cofactor.

In terms of biological role, necessary for normal cell division and for the maintenance of normal septation. In Streptococcus sanguinis (strain SK36), this protein is Probable GTP-binding protein EngB.